An 85-amino-acid chain; its full sequence is MAHKKAAGSTRNGRDSEAKRLGVKRFGGESVLAGNIIVRQRGTRFHAGSNMGIGKDHTLFALSDGKVQFEVKGPKSRKFVSIIAD.

Positions 1–20 (MAHKKAAGSTRNGRDSEAKR) are disordered.

The protein belongs to the bacterial ribosomal protein bL27 family.

This chain is Large ribosomal subunit protein bL27, found in Colwellia psychrerythraea (strain 34H / ATCC BAA-681) (Vibrio psychroerythus).